The following is a 255-amino-acid chain: uncharacterized protein (255 aa).

The N-terminal stretch at 1–23 (MKRLNTLVLYISFLILIISIVAG) is a signal peptide. A lipid anchor (N-palmitoyl cysteine) is attached at Cys-24. Cys-24 carries the S-diacylglycerol cysteine lipid modification.

It belongs to the staphylococcal tandem lipoprotein family.

The protein localises to the cell membrane. This is an uncharacterized protein from Staphylococcus aureus (strain N315).